The sequence spans 508 residues: MKLAYWMYAGPAHIGTLRIASSFKNVHAIMHAPLGDDYFNVMRSMLERERNFTPVTASIVDRNVLARGSQEKVVDNIVRKDQEERPDLIVLTPTCTSSILQEDLENFVARAQLDAQGDVILADVNHYRVNELQAGDRTLQQIVQFYINKARKKGDLATEKTPQPSVNIIGISTLGFHNNHDIRELKTLMAELGISVNLVIPDKASVHDLKKLPQAWFNLVPYRELGLPTAKYLEQEFDQPYVDITPMGVVETARCIRAIQGAINDQGATADYEAFIEEQTLHVSQAAWFSRSIDCQNLTGKKAIVFGDNTHAVAMTKILAREMGIHVVLAGTYCKYDADWFRQEVSEYCDEILISEDHGEIADAIARLEPAAIFGTQMERHVGKRLNIPCGVIAAPIHIQNFPIGYRPFVGYEGTNQIADLVYNSFTLGMEDHLLEIFGGHDTKEVITTTMSASSDLNWTTEAQGQLNKVPGFVRGKVKRNTEKYARAQGLSEISLEVLYAAKESVGA.

A [4Fe-4S] cluster-binding site is contributed by aspartate 36. The Proton donor role is filled by aspartate 294. 429 to 430 contributes to the substrate binding site; sequence GM.

The protein belongs to the ChlB/BchB/BchZ family. Protochlorophyllide reductase is composed of three subunits; ChlL, ChlN and ChlB. Forms a heterotetramer of two ChlB and two ChlN subunits. It depends on [4Fe-4S] cluster as a cofactor.

It carries out the reaction chlorophyllide a + oxidized 2[4Fe-4S]-[ferredoxin] + 2 ADP + 2 phosphate = protochlorophyllide a + reduced 2[4Fe-4S]-[ferredoxin] + 2 ATP + 2 H2O. The protein operates within porphyrin-containing compound metabolism; chlorophyll biosynthesis (light-independent). Component of the dark-operative protochlorophyllide reductase (DPOR) that uses Mg-ATP and reduced ferredoxin to reduce ring D of protochlorophyllide (Pchlide) to form chlorophyllide a (Chlide). This reaction is light-independent. The NB-protein (ChlN-ChlB) is the catalytic component of the complex. The polypeptide is Light-independent protochlorophyllide reductase subunit B (Picosynechococcus sp. (strain ATCC 27264 / PCC 7002 / PR-6) (Agmenellum quadruplicatum)).